A 348-amino-acid polypeptide reads, in one-letter code: Fe-S cluster assembly protein DRE2 (348 aa).

An N-terminal SAM-like domain region spans residues 1–185 (MSGEKSSLLL…KKPESPRASV (185 aa)). 2 disordered regions span residues 128–148 (QTAPVALRPKRNTPSGGSKSL) and 162–213 (KKAE…TASK). The tract at residues 186-241 (VAEDLDDGDELDGMNEDDSNSDELTASKSKFFDDVAGQDSADSIDEDDLVDDAEKS) is linker. Over residues 188-206 (EDLDDGDELDGMNEDDSNS) the composition is skewed to acidic residues. Residues cysteine 248, cysteine 259, cysteine 262, and cysteine 264 each contribute to the [2Fe-2S] cluster site. A fe-S binding site A region spans residues 248 to 264 (CGKTKTRRRKACKDCTC). Positions 311, 314, 322, and 325 each coordinate [4Fe-4S] cluster. 2 short sequence motifs (cx2C motif) span residues 311-314 (CGSC) and 322-325 (CSGC). The segment at 311-325 (CGSCSLGDAFRCSGC) is fe-S binding site B.

Belongs to the anamorsin family. In terms of assembly, monomer. Interacts with TAH18. Interacts with MIA40. The cofactor is [2Fe-2S] cluster. [4Fe-4S] cluster serves as cofactor.

The protein resides in the cytoplasm. It localises to the mitochondrion intermembrane space. Component of the cytosolic iron-sulfur (Fe-S) protein assembly (CIA) machinery required for the maturation of extramitochondrial Fe-S proteins. Part of an electron transfer chain functioning in an early step of cytosolic Fe-S biogenesis, facilitating the de novo assembly of a [4Fe-4S] cluster on the scaffold complex CFD1-NBP35. Electrons are transferred to DRE2 from NADPH via the FAD- and FMN-containing protein TAH18. TAH18-DRE2 are also required for the assembly of the diferric tyrosyl radical cofactor of ribonucleotide reductase (RNR), probably by providing electrons for reduction during radical cofactor maturation in the catalytic small subunit RNR2. The sequence is that of Fe-S cluster assembly protein DRE2 from Lachancea thermotolerans (strain ATCC 56472 / CBS 6340 / NRRL Y-8284) (Yeast).